A 261-amino-acid chain; its full sequence is Taurine import ATP-binding protein TauB (261 aa).

Residues 4-233 form the ABC transporter domain; the sequence is LTADRVSVRY…RWRAGDSARA (230 aa). 38 to 45 is a binding site for ATP; sequence GPSGCGKT.

The protein belongs to the ABC transporter superfamily. Taurine importer (TC 3.A.1.17.1) family. As to quaternary structure, the complex is composed of two ATP-binding proteins (TauB), two transmembrane proteins (TauC) and a solute-binding protein (TauA).

It is found in the cell inner membrane. It catalyses the reaction taurine(out) + ATP + H2O = taurine(in) + ADP + phosphate + H(+). In terms of biological role, part of the ABC transporter complex TauABC involved in taurine import. Responsible for energy coupling to the transport system. This Chromobacterium violaceum (strain ATCC 12472 / DSM 30191 / JCM 1249 / CCUG 213 / NBRC 12614 / NCIMB 9131 / NCTC 9757 / MK) protein is Taurine import ATP-binding protein TauB.